Reading from the N-terminus, the 1591-residue chain is Rho guanine nucleotide exchange factor TIAM1 (1591 aa).

Residues 1-78 form a disordered region; that stretch reads MGNAESQHVE…AENGLEPFSQ (78 aa). G2 is lipidated: N-myristoyl glycine. Residues 7-19 show a composition bias toward basic and acidic residues; sequence QHVEHEFYGEKHA. The span at 20–49 shows a compositional bias: basic residues; the sequence is SLGRKHTSRSLRLSHKTRRTRHASSGKVIH. Over residues 53-67 the composition is skewed to low complexity; the sequence is EVSTRSSSTPSIPQS. S231 carries the phosphoserine modification. Disordered regions lie at residues 298-379 and 393-422; these read SEGA…GDAA and MSTTNSESLEEAGSAHSDEQSSGTLSSPGQ. 2 stretches are compositionally biased toward polar residues: residues 300–313 and 340–361; these read GATNPQISHSNSMQ and TTDTDLLSRRSNATNSSYSPTT. A phosphoserine mark is found at S356 and S358. Residues 367–377 show a composition bias toward low complexity; that stretch reads GSDSGSSSTGD. A compositionally biased stretch (polar residues) spans 412-422; the sequence is QSSGTLSSPGQ. The PH 1 domain maps to 434 to 549; it reads VRKAGALAVK…TAIHSACATA (116 aa). S695 is modified (phosphoserine). One can recognise an RBD domain in the interval 765–832; sequence TPSWFCLPNN…QPEEDIYELL (68 aa). At Y829 the chain carries Phosphotyrosine; by NTRK2. Residues 845-908 enclose the PDZ domain; that stretch reads SIHIEKSDTA…NNRAADALNS (64 aa). Positions 939 to 1034 are disordered; it reads SPPHRVDGPA…TGPQLATMRQ (96 aa). Residues 958–975 are compositionally biased toward polar residues; the sequence is LTSNPGHSLCSEQGSSAE. Residues 977 to 990 are compositionally biased toward acidic residues; it reads APEETEGPDLESSD. Positions 1014–1024 are enriched in low complexity; it reads PSDQSPSPQDS. A compositionally biased stretch (polar residues) spans 1025–1034; sequence TGPQLATMRQ. One can recognise a DH domain in the interval 1040 to 1234; sequence KLRKVICELL…NKVASHINEM (195 aa). Residues 1261-1397 enclose the PH 2 domain; sequence DLSMGDLLLH…KAVHSILRDK (137 aa). Position 1323 is a phosphotyrosine (Y1323). Residues K1404 and K1420 each participate in a glycyl lysine isopeptide (Lys-Gly) (interchain with G-Cter in ubiquitin) cross-link. Positions 1456 to 1482 are disordered; it reads TIDSDAVSASSPEKESQQPPGGGDTDR. Residue S1519 is modified to Phosphoserine.

Belongs to the TIAM family. In terms of assembly, component of the Par polarity complex, composed of at least phosphorylated PRKCZ, PARD3 and TIAM1. Interacts with NTRK2; mediates the activation of RAC1 by BDNF. Interacts with MAPK8IP2 and CD44. Interacts with BAIAP2. Interacts with EPHA8; regulates clathrin-mediated endocytosis of EPHA8. Interacts with PARD3. Interacts (via PDZ domain) with CNTNAP4, SDC1 and SDC3 (via C-terminus). Ubiquitinated. Undergoes 'Lys-48' ubiquitination at Lys-1404 and Lys-1420 by a CUL3(KBTBD6/7) E3 ubiquitin ligase complex composed of CUL3, RBX1, KBTBD6 and KBTBD7. 'Lys-48' ubiquitination at Lys-1404 and Lys-1420 triggers proteasomal degradation. Ubiquitination at Lys-1404 and Lys-1420 by CUL3(KBTBD6/7) also requires the membrane-associated protein GABARAP and may therefore be spatially restricted within the cell. In terms of tissue distribution, found in virtually all analyzed tumor cell lines including B- and T-lymphomas, neuroblastomas, melanomas and carcinomas.

The protein localises to the cell junction. Its subcellular location is the cell membrane. Its function is as follows. Guanyl-nucleotide exchange factor that activates RHO-like proteins and connects extracellular signals to cytoskeletal activities. Activates RAC1, CDC42, and to a lesser extent RHOA and their downstream signaling to regulate processes like cell adhesion and cell migration. The polypeptide is Rho guanine nucleotide exchange factor TIAM1 (Homo sapiens (Human)).